Here is an 88-residue protein sequence, read N- to C-terminus: uncharacterized protein (88 aa).

Residues 39–63 (CEECGAPIPQARREAIPGVRLCIHC) form a dksA C4-type zinc finger.

This is an uncharacterized protein from Escherichia coli (strain K12).